The sequence spans 671 residues: UvrABC system protein C (671 aa).

The GIY-YIG domain maps to 16–95 (VEPGVYRFRD…IKEFDPRFNV (80 aa)). The UVR domain maps to 208-243 (DRLARDMEREMNQAAQELNFERAARLRDNISALQRA). The segment at 645 to 671 (SSAPSSGATEAVLPAMVENGVDDTPST) is disordered.

The protein belongs to the UvrC family. In terms of assembly, interacts with UvrB in an incision complex.

The protein localises to the cytoplasm. Functionally, the UvrABC repair system catalyzes the recognition and processing of DNA lesions. UvrC both incises the 5' and 3' sides of the lesion. The N-terminal half is responsible for the 3' incision and the C-terminal half is responsible for the 5' incision. In Mycobacteroides abscessus (strain ATCC 19977 / DSM 44196 / CCUG 20993 / CIP 104536 / JCM 13569 / NCTC 13031 / TMC 1543 / L948) (Mycobacterium abscessus), this protein is UvrABC system protein C.